The following is a 218-amino-acid chain: Mediator of RNA polymerase II transcription subunit 20 (218 aa).

This sequence belongs to the Mediator complex subunit 20 family. Component of the Mediator complex.

It localises to the nucleus. Its function is as follows. Component of the Mediator complex, a coactivator involved in the regulated transcription of nearly all RNA polymerase II-dependent genes. Mediator functions as a bridge to convey information from gene-specific regulatory proteins to the basal RNA polymerase II transcription machinery. Mediator is recruited to promoters by direct interactions with regulatory proteins and serves as a scaffold for the assembly of a functional preinitiation complex with RNA polymerase II and the general transcription factors. The chain is Mediator of RNA polymerase II transcription subunit 20 (SRB2) from Yarrowia lipolytica (strain CLIB 122 / E 150) (Yeast).